Reading from the N-terminus, the 147-residue chain is Protein MC014 (147 aa).

The protein localises to the host nucleus. This chain is Protein MC014 (MC014), found in Homo sapiens (Human).